We begin with the raw amino-acid sequence, 164 residues long: NADH-quinone oxidoreductase subunit I (164 aa).

4Fe-4S ferredoxin-type domains follow at residues Leu-54–Gly-84 and Val-95–Asn-124. Cys-64, Cys-67, Cys-70, Cys-74, Cys-104, Cys-107, Cys-110, and Cys-114 together coordinate [4Fe-4S] cluster.

It belongs to the complex I 23 kDa subunit family. In terms of assembly, NDH-1 is composed of 14 different subunits. Subunits NuoA, H, J, K, L, M, N constitute the membrane sector of the complex. It depends on [4Fe-4S] cluster as a cofactor.

The protein resides in the cell inner membrane. It catalyses the reaction a quinone + NADH + 5 H(+)(in) = a quinol + NAD(+) + 4 H(+)(out). NDH-1 shuttles electrons from NADH, via FMN and iron-sulfur (Fe-S) centers, to quinones in the respiratory chain. The immediate electron acceptor for the enzyme in this species is believed to be ubiquinone. Couples the redox reaction to proton translocation (for every two electrons transferred, four hydrogen ions are translocated across the cytoplasmic membrane), and thus conserves the redox energy in a proton gradient. The chain is NADH-quinone oxidoreductase subunit I from Mesorhizobium japonicum (strain LMG 29417 / CECT 9101 / MAFF 303099) (Mesorhizobium loti (strain MAFF 303099)).